The sequence spans 2193 residues: MPLPLPSAIVCGPQTNLPSQRNLDWLRSYLTQRPDVEHLLQAVLELPDLLSALQEHDHDLRLIPASSLKDLREWCLDHSIILQIPETLPNVLLAPLTVLIHIIQYLEYCDHLSSEDVHARVRQSIRNGGFQGLCTGSLSAAALACSTTRPEIGQNAAVALKLAMCVGAYVDLGLALEADSPMTCFIARWRHGSQREDVDQILNNFPQAYISVNMDECSATITASKASIPALRDSLRSKSIQFAKVQVNGRYHTASNTKFLENLLKFCRYQSNLRFPPTDYQNIPWRNNTTGKVVGRADQRHEICLRSILTEPASWYLTMSETVKTIVSATPDDCLIPILELGLISCVPSSLSSLPSVHVSRVVVPDEAQNIPELCDYNYTDECVAIVGAACKYPGAESLDELWRVISTAQTMNGQAPPQRYDPTDLRQGPSQSMDLSGNFISGVDQFDYSFFGISPREAMYMDPQQRIALQVAYRAVESSGYFGYGAQTTDFGCYLGVGGSDYEHNVNAHSPTAFSFIGTSRAFISGRISHFFRWTGPSMTIDTACSSSAVAIHQACRDILSGDCEMALAGGINVMSNSTTHQNLATANFLNATGTPCRSFDSGGNGYCRGEGCGLVVLKKLTAAVADGDHILGVIPATATNQSDGSSSITVPVSKQQISLYRRALSRAKMIPEDISYIEAHGTGTPRGDPIEWRSIHEVFGQARESSLNIGSVKGNIGHTEAASGVAGVLKVLLMIKYKQLPPQAHFTSLNHDIPSAQQKHVTVNKRSLQWNRRLRAACVNNYGASGNNTVIIVCEPPKAETTKTLIRDERGKQAGTSHPFWISGHSLGSLQRNIAVISKFVDMCHPTLDDVAFNVARMQNRSLRHRVVFGASSLEELQHRLKDPSHLSLDTHTTEDGPKPVVMVFSGQSGMTVHLHKAVYDASCLIRKHVDQCDTILRSIGLPSLFPGIFSQNPISDIVQLHCAIFTIQYACAAAWLDSGLSVQRVLGHSFGQLTAMCVAGIITPSDGLKLVSGRAKLIESKWGSEKGAMLSIKADRATAIALAQSEAKLGVEIACFNGPTSHVLVGSNAAIETVASKVSKSTVRKLNTSHGFHSRYIDSFLDEYLELAQSISYSTPTIPIETCSEISSWESFTPALVAEHSRKPVYFVDAVRRIKENLGSCVWLEAGSGSSGVTLAKSALNGSDSDSFHGLQLGTADALESLTETTLRLWKDRVSVQFWKHHRGENSLFKPLSIPGYQFDETSHWLPRAERVRSEPLSKKLPPMLSLENFSSPERHLSVFTIDQLSPEIAEILQARKVLDELLWPLSLYIELVSRAAALLTPALPREFQRLRVENFEIKSPLGSRVDARLELRLKLTEQRTWEWSLEGQTSAQTLPYATGRVVLEDRRRSGTEIQRSYLSILESRHCRGLLDDDTVFSASGSIAYKLLEKVAEYDLPYQAIASIKMNEQEALAQVSVPQAAGEWVKRKSVHPVLLDQFTLVAELHALSMIKCKRSEVFTCSEVRETVVYEELSPVSTASWTVYTCQSSLHGRVATYDIYVFDPASKTIIFSVLGAKFVKISSHILQEIVHRANSTPDLSENIFQIKAASPAMQTIQAADPLPTLATTLHSLPHVWSVAAQLVHELTGYAVERITAETMLCNVGMDSLATTELEHKIREILEVDINVQSFGKNVTFGSLVDIVSSQGSSRQAENIGSSVCSTPFTSSAGRSSPISEVDSCRILSDSMIKLCKIVEEYLGSTESVQPGMQLRSLGLDSLVTMELESELYKTFGQQLSLMQLGEEVTINELHDLMQSHPATVADERTESKQSIAREASQSPHFVDEAADRFAQAQDKIGEYAEAAQFLGFFDRVYPQQMSLVLAYVTEAFAALGCDLSEISPGSLIPCIPHIAKHDNVVAYYHNLLHQVGFIIPSDNGFIRTSEPCKRVDPGPLHLDIVHSFPYHGSEHKLLRRTGAQLADCLTGKADALRLLFSDKTTGELLQDVYTNAPMFKMGTLILGHFLPQALESFAATCKEPVRILELGAGTGGTTRYILDQLVTRGIPIRYTFTDISSTLVSRARDTFRAYDCVEYMTLNVEQINPEVAGSYDVILSSNCIHATKDLRHSCQGLYDLLRPKGMLCLLELTRDVPWLDLTFGLLDGWWRFDDGREHVLASEQMWKRLLQEAGFTHVDWSNDESRESDVFRLIMALKK.

In terms of domain architecture, Starter acyltransferase (SAT) spans Asn-90–His-252. One can recognise a Ketosynthase family 3 (KS3) domain in the interval Asp-381–Glu-797. Catalysis depends on for beta-ketoacyl synthase activity residues Cys-546, His-682, and His-720. Residues Val-906–Lys-1158 form the Malonyl-CoA:ACP transacylase (MAT) domain. Catalysis depends on Ser-992, which acts as the For acyl/malonyl transferase activity. An N-terminal hotdog fold region spans residues Pro-1265–Arg-1392. Positions Pro-1265–Gln-1569 constitute a PKS/mFAS DH domain. The interval Val-1419–Gln-1569 is C-terminal hotdog fold. Residue Asp-1479 is the Proton donor; for dehydratase activity of the active site. Positions Arg-1723 to Pro-1799 constitute a Carrier domain. At Ser-1759 the chain carries O-(pantetheine 4'-phosphoryl)serine. Residues Tyr-1944 to Asp-2177 are methyltransferase (CMeT) domain.

Pantetheine 4'-phosphate serves as cofactor.

It participates in secondary metabolite biosynthesis; terpenoid biosynthesis. In terms of biological role, non-reducing polyketide synthase; part of the cluster that mediates the biosynthesis of shearones, diterpenoid pyrones (DPs) which are structurally diverse meroterpenoids consisting of a diterpene linked by a pyrone, and which may exhibit a range of bioactivities. Whitin the pathway, esdpA takes part to the biosynthesis of the molecular scaffold via the production of the alpha-pyrone from one molecule of acetyl-CoA, two molecules of malonyl-CoA and one molecule of S-adenosyl-L-methionine (SAM). The molecular scaffold is commonly biosynthesized by a series of enzymes including the non-reducing polyketide synthase (NR-PKS) esdpA that generates an alpha-pyrone; the prenyltransferase esdpC that attaches a geranylgeranyl pyrophosphate (GGPP) produced by the GGPP synthase (GGPPS) esdpD onto the pyrone unit; the FAD-dependent monooxygenase esdpE that converts an olefin on the diterpene unit into an epoxide; and the terpene cyclase esdpB that catalyzes the cyclization reactions to give the molecular backbone shearone A. In the modification steps, esdpF oxidizes the hydroxy group to a ketone at C-3 and esdpG then attaches hydroxy groups at both C-11 and C-12. After that, esdpI hydroxylates at C-20 and esdpH hydroxylates at C-6'. The ether bridge is generated by nucleophilic attack of the hydroxy group at C-20 to the carbonyl carbon at C-3. EsdpH can also functions prior to esdpI. The different combinations of these modification enzymes lead to the production of diverse shearone derivatives, shearone I being the end product of the pathway. The alpha-ketoglutarate-dependent dioxygenase esdpJ seems not to be involved in this pathway. In Penicillium shearii (Eupenicillium shearii), this protein is Non-reducing polyketide synthase esdpA.